A 341-amino-acid polypeptide reads, in one-letter code: MSETAGKGVTMPEIMQSSYPDETLYREKDDSIRPSRLDDFIGQEELRENLKVFLNAARDRGQAMDHTLFYGNPGLGKTTLAQIIAAELGVNLICTSGPVLERSGDLAAILTNLSKHDILFVDEIHRMPITVEEILYPALEDYKLDLVIGQGPAARTVKIELEPFTLVGATTRIGLISSPLRDRFGIISRLEFYTPEELSQIILRTSRILNVPITKKGAIEIGRRSRGTPRIANRLLRRVRDFAAVFGSATVDEELVNHALQKLDVDEKGLDQMDRKLLTVLIELFAGGPVGIKTLAVACSEEVRTIEDIYEPYLIQCGFMKRTPRGRMATVKAYKHLNLTD.

Positions 1–22 (MSETAGKGVTMPEIMQSSYPDE) are disordered. Residues 4 to 193 (TAGKGVTMPE…FGIISRLEFY (190 aa)) are large ATPase domain (RuvB-L). ATP is bound by residues I32, R33, G74, K77, T78, T79, 140–142 (EDY), R183, Y193, and R230. A Mg(2+)-binding site is contributed by T78. Positions 194–264 (TPEELSQIIL…LVNHALQKLD (71 aa)) are small ATPAse domain (RuvB-S). The segment at 267–341 (EKGLDQMDRK…KAYKHLNLTD (75 aa)) is head domain (RuvB-H). The DNA site is built by R322 and R327.

This sequence belongs to the RuvB family. In terms of assembly, homohexamer. Forms an RuvA(8)-RuvB(12)-Holliday junction (HJ) complex. HJ DNA is sandwiched between 2 RuvA tetramers; dsDNA enters through RuvA and exits via RuvB. An RuvB hexamer assembles on each DNA strand where it exits the tetramer. Each RuvB hexamer is contacted by two RuvA subunits (via domain III) on 2 adjacent RuvB subunits; this complex drives branch migration. In the full resolvosome a probable DNA-RuvA(4)-RuvB(12)-RuvC(2) complex forms which resolves the HJ.

It is found in the cytoplasm. It carries out the reaction ATP + H2O = ADP + phosphate + H(+). Functionally, the RuvA-RuvB-RuvC complex processes Holliday junction (HJ) DNA during genetic recombination and DNA repair, while the RuvA-RuvB complex plays an important role in the rescue of blocked DNA replication forks via replication fork reversal (RFR). RuvA specifically binds to HJ cruciform DNA, conferring on it an open structure. The RuvB hexamer acts as an ATP-dependent pump, pulling dsDNA into and through the RuvAB complex. RuvB forms 2 homohexamers on either side of HJ DNA bound by 1 or 2 RuvA tetramers; 4 subunits per hexamer contact DNA at a time. Coordinated motions by a converter formed by DNA-disengaged RuvB subunits stimulates ATP hydrolysis and nucleotide exchange. Immobilization of the converter enables RuvB to convert the ATP-contained energy into a lever motion, pulling 2 nucleotides of DNA out of the RuvA tetramer per ATP hydrolyzed, thus driving DNA branch migration. The RuvB motors rotate together with the DNA substrate, which together with the progressing nucleotide cycle form the mechanistic basis for DNA recombination by continuous HJ branch migration. Branch migration allows RuvC to scan DNA until it finds its consensus sequence, where it cleaves and resolves cruciform DNA. This chain is Holliday junction branch migration complex subunit RuvB, found in Lawsonia intracellularis (strain PHE/MN1-00).